The primary structure comprises 454 residues: Histidine--tRNA ligase (454 aa).

A disordered region spans residues 434–454; sequence ADAGAWNPPTEDLHPGVIGTW.

Belongs to the class-II aminoacyl-tRNA synthetase family. As to quaternary structure, homodimer.

It is found in the cytoplasm. The catalysed reaction is tRNA(His) + L-histidine + ATP = L-histidyl-tRNA(His) + AMP + diphosphate + H(+). The protein is Histidine--tRNA ligase (hisS) of Cutibacterium acnes (strain DSM 16379 / KPA171202) (Propionibacterium acnes).